We begin with the raw amino-acid sequence, 331 residues long: Ketol-acid reductoisomerase (NADP(+)) (331 aa).

The region spanning 3–183 (AQMYYDDDAD…GGTRAGALKT (181 aa)) is the KARI N-terminal Rossmann domain. Residues 26 to 29 (YGSQ), Ser-52, and Ser-54 contribute to the NADP(+) site. His-109 is a catalytic residue. Gly-135 serves as a coordination point for NADP(+). The 146-residue stretch at 184-329 (TFKEETETDL…TELRSLMSWL (146 aa)) folds into the KARI C-terminal knotted domain. Mg(2+)-binding residues include Asp-192, Glu-196, Glu-228, and Glu-232. Ser-253 serves as a coordination point for substrate.

This sequence belongs to the ketol-acid reductoisomerase family. Requires Mg(2+) as cofactor.

The catalysed reaction is (2R)-2,3-dihydroxy-3-methylbutanoate + NADP(+) = (2S)-2-acetolactate + NADPH + H(+). The enzyme catalyses (2R,3R)-2,3-dihydroxy-3-methylpentanoate + NADP(+) = (S)-2-ethyl-2-hydroxy-3-oxobutanoate + NADPH + H(+). The protein operates within amino-acid biosynthesis; L-isoleucine biosynthesis; L-isoleucine from 2-oxobutanoate: step 2/4. It participates in amino-acid biosynthesis; L-valine biosynthesis; L-valine from pyruvate: step 2/4. Functionally, involved in the biosynthesis of branched-chain amino acids (BCAA). Catalyzes an alkyl-migration followed by a ketol-acid reduction of (S)-2-acetolactate (S2AL) to yield (R)-2,3-dihydroxy-isovalerate. In the isomerase reaction, S2AL is rearranged via a Mg-dependent methyl migration to produce 3-hydroxy-3-methyl-2-ketobutyrate (HMKB). In the reductase reaction, this 2-ketoacid undergoes a metal-dependent reduction by NADPH to yield (R)-2,3-dihydroxy-isovalerate. The chain is Ketol-acid reductoisomerase (NADP(+)) from Thermobifida fusca (strain YX).